The sequence spans 778 residues: Phosphoribosylformylglycinamidine synthase subunit PurL (778 aa).

Histidine 44 is an active-site residue. ATP-binding residues include tyrosine 47 and lysine 86. Glutamate 88 lines the Mg(2+) pocket. Residues 89 to 92 (SHNH) and arginine 111 each bind substrate. Histidine 90 serves as the catalytic Proton acceptor. Mg(2+) is bound by residues aspartate 112 and aspartate 265. A substrate-binding site is contributed by 309-311 (ESQ). Residues 455–474 (TRQPPGEGLPGRSGQAGPPK) are disordered. Residues asparagine 518 and glycine 555 each contribute to the ATP site. Asparagine 556 serves as a coordination point for Mg(2+). Substrate is bound at residue serine 558.

The protein belongs to the FGAMS family. Monomer. Part of the FGAM synthase complex composed of 1 PurL, 1 PurQ and 2 PurS subunits.

Its subcellular location is the cytoplasm. It catalyses the reaction N(2)-formyl-N(1)-(5-phospho-beta-D-ribosyl)glycinamide + L-glutamine + ATP + H2O = 2-formamido-N(1)-(5-O-phospho-beta-D-ribosyl)acetamidine + L-glutamate + ADP + phosphate + H(+). It participates in purine metabolism; IMP biosynthesis via de novo pathway; 5-amino-1-(5-phospho-D-ribosyl)imidazole from N(2)-formyl-N(1)-(5-phospho-D-ribosyl)glycinamide: step 1/2. Functionally, part of the phosphoribosylformylglycinamidine synthase complex involved in the purines biosynthetic pathway. Catalyzes the ATP-dependent conversion of formylglycinamide ribonucleotide (FGAR) and glutamine to yield formylglycinamidine ribonucleotide (FGAM) and glutamate. The FGAM synthase complex is composed of three subunits. PurQ produces an ammonia molecule by converting glutamine to glutamate. PurL transfers the ammonia molecule to FGAR to form FGAM in an ATP-dependent manner. PurS interacts with PurQ and PurL and is thought to assist in the transfer of the ammonia molecule from PurQ to PurL. The chain is Phosphoribosylformylglycinamidine synthase subunit PurL from Symbiobacterium thermophilum (strain DSM 24528 / JCM 14929 / IAM 14863 / T).